The sequence spans 442 residues: ATP-dependent RNA helicase SUB2-2 (442 aa).

A Q motif motif is present at residues 58 to 86 (TGFKDFLLKPELARAIIDCGFEHPSEVQQ). The region spanning 89–264 (IPQSIHGTDV…RRFLQNPLEI (176 aa)) is the Helicase ATP-binding domain. 102–109 (AKSGLGKT) is an ATP binding site. Residues 211–214 (DECD) carry the DECD box motif. Residues 292 to 437 (KLAQLLDDLE…EFPEEGIDPS (146 aa)) form the Helicase C-terminal domain.

It belongs to the DEAD box helicase family. DECD subfamily.

Its subcellular location is the nucleus. It catalyses the reaction ATP + H2O = ADP + phosphate + H(+). Its function is as follows. ATP-binding RNA helicase involved in transcription elongation and required for the export of mRNA out of the nucleus. SUB2 also plays a role in pre-mRNA splicing and spliceosome assembly. May be involved in rDNA and telomeric silencing, and maintenance of genome integrity. The sequence is that of ATP-dependent RNA helicase SUB2-2 (SUB2-2) from Vanderwaltozyma polyspora (strain ATCC 22028 / DSM 70294 / BCRC 21397 / CBS 2163 / NBRC 10782 / NRRL Y-8283 / UCD 57-17) (Kluyveromyces polysporus).